The chain runs to 421 residues: Tyrosine--tRNA ligase (421 aa).

Y38 is an L-tyrosine binding site. The short motif at P43 to H52 is the 'HIGH' region element. L-tyrosine is bound by residues Y169 and Q173. The 'KMSKS' region signature appears at K231–S235. K234 is a binding site for ATP. Positions K353 to I419 constitute an S4 RNA-binding domain.

The protein belongs to the class-I aminoacyl-tRNA synthetase family. TyrS type 1 subfamily. In terms of assembly, homodimer.

Its subcellular location is the cytoplasm. The catalysed reaction is tRNA(Tyr) + L-tyrosine + ATP = L-tyrosyl-tRNA(Tyr) + AMP + diphosphate + H(+). In terms of biological role, catalyzes the attachment of tyrosine to tRNA(Tyr) in a two-step reaction: tyrosine is first activated by ATP to form Tyr-AMP and then transferred to the acceptor end of tRNA(Tyr). This chain is Tyrosine--tRNA ligase, found in Lactobacillus delbrueckii subsp. bulgaricus (strain ATCC BAA-365 / Lb-18).